Here is a 976-residue protein sequence, read N- to C-terminus: 5'-3' exoribonuclease 2 homolog (976 aa).

The CCHC-type zinc finger occupies 264–281 (RACELCGQYGHELKECRG). Positions 411–420 (DEERFKENQK) are enriched in basic and acidic residues. Residues 411 to 442 (DEERFKENQKNKKARMQQYGRGRGGRGRGRGQ) are disordered. Residues 535–788 (DIRLYESGWK…GICVLYEDPE (254 aa)) are interaction with paxt-1. The disordered stretch occupies residues 815 to 976 (WNERRDGRFN…GGYQGNSSWR (162 aa)). Over residues 856 to 866 (DRQGGNDNYRG) the composition is skewed to low complexity.

This sequence belongs to the 5'-3' exonuclease family. XRN2/RAT1 subfamily. In terms of assembly, interacts with paxt-1 (via N-terminus); the interaction is direct and results in stabilization of xrn-2 in the complex.

The protein resides in the nucleus. Possesses 5'-&gt;3' exoribonuclease activity. Plays a role in maintenance of steady-state concentration and turnover of microRNAs (miRNA) by degradation of mature miRNA. Degradation role is enhanced when in complex with paxt-1. Partially redundant to xrn-1 in miRNA guide strand degradation. Implicated in differential regulation of mRNAs such as let-7 by controlling the accumulation of mature miRNA. Positively regulates molting of the pharyngeal cuticle. This Caenorhabditis briggsae protein is 5'-3' exoribonuclease 2 homolog.